The primary structure comprises 200 residues: 3-isopropylmalate dehydratase small subunit (200 aa).

Belongs to the LeuD family. LeuD type 1 subfamily. As to quaternary structure, heterodimer of LeuC and LeuD.

The enzyme catalyses (2R,3S)-3-isopropylmalate = (2S)-2-isopropylmalate. It functions in the pathway amino-acid biosynthesis; L-leucine biosynthesis; L-leucine from 3-methyl-2-oxobutanoate: step 2/4. Catalyzes the isomerization between 2-isopropylmalate and 3-isopropylmalate, via the formation of 2-isopropylmaleate. The polypeptide is 3-isopropylmalate dehydratase small subunit (Aliivibrio fischeri (strain ATCC 700601 / ES114) (Vibrio fischeri)).